A 115-amino-acid chain; its full sequence is Superoxide reductase (115 aa).

Fe cation contacts are provided by Glu-14, His-16, His-41, His-47, Cys-102, and His-105.

The protein belongs to the desulfoferrodoxin family. As to quaternary structure, homotetramer. Fe cation is required as a cofactor.

The enzyme catalyses reduced [rubredoxin] + superoxide + 2 H(+) = oxidized [rubredoxin] + H2O2. Functionally, uses electrons from reduced NADP, by way of rubredoxin and an oxidoreductase, to catalyze the reduction of superoxide to hydrogen peroxide. This Pyrococcus horikoshii (strain ATCC 700860 / DSM 12428 / JCM 9974 / NBRC 100139 / OT-3) protein is Superoxide reductase (sorA).